Consider the following 497-residue polypeptide: Serine hydroxymethyltransferase (497 aa).

Residues leucine 176 and 180-182 (GHL) contribute to the (6S)-5,6,7,8-tetrahydrofolate site. Lysine 289 carries the post-translational modification N6-(pyridoxal phosphate)lysine.

This sequence belongs to the SHMT family. In terms of assembly, homodimer. The cofactor is pyridoxal 5'-phosphate.

It localises to the cytoplasm. The enzyme catalyses (6R)-5,10-methylene-5,6,7,8-tetrahydrofolate + glycine + H2O = (6S)-5,6,7,8-tetrahydrofolate + L-serine. It functions in the pathway one-carbon metabolism; tetrahydrofolate interconversion. It participates in amino-acid biosynthesis; glycine biosynthesis; glycine from L-serine: step 1/1. In terms of biological role, catalyzes the reversible interconversion of serine and glycine with tetrahydrofolate (THF) serving as the one-carbon carrier. This reaction serves as the major source of one-carbon groups required for the biosynthesis of purines, thymidylate, methionine, and other important biomolecules. Also exhibits THF-independent aldolase activity toward beta-hydroxyamino acids, producing glycine and aldehydes, via a retro-aldol mechanism. The chain is Serine hydroxymethyltransferase from Chlamydia trachomatis serovar L2b (strain UCH-1/proctitis).